Reading from the N-terminus, the 118-residue chain is Large ribosomal subunit protein bL19 (118 aa).

The protein belongs to the bacterial ribosomal protein bL19 family.

This protein is located at the 30S-50S ribosomal subunit interface and may play a role in the structure and function of the aminoacyl-tRNA binding site. This Salinibacter ruber (strain DSM 13855 / M31) protein is Large ribosomal subunit protein bL19.